The primary structure comprises 260 residues: Triosephosphate isomerase (260 aa).

Residue 11-13 participates in substrate binding; it reads NWK. The active-site Electrophile is His103. The active-site Proton acceptor is Glu175. Residues Gly181, Ser220, and 241–242 contribute to the substrate site; that span reads GG.

This sequence belongs to the triosephosphate isomerase family. In terms of assembly, homodimer.

The protein resides in the cytoplasm. The enzyme catalyses D-glyceraldehyde 3-phosphate = dihydroxyacetone phosphate. It functions in the pathway carbohydrate biosynthesis; gluconeogenesis. The protein operates within carbohydrate degradation; glycolysis; D-glyceraldehyde 3-phosphate from glycerone phosphate: step 1/1. Involved in the gluconeogenesis. Catalyzes stereospecifically the conversion of dihydroxyacetone phosphate (DHAP) to D-glyceraldehyde-3-phosphate (G3P). The sequence is that of Triosephosphate isomerase from Shewanella sp. (strain MR-7).